Consider the following 577-residue polypeptide: F-box/TPR repeat protein pof3 (577 aa).

TPR repeat units lie at residues 6 to 39, 41 to 74, and 76 to 108; these read VKAIKEKTQQYLSKRKFEDALTFITKTIEQEPNP, IDLFELRAQVYEKSGQYSQAELDAKRMIHLNARN, and RGYLRLGKLLQLDGFDKKADQLYTQGLRMVHKM. The F-box domain occupies 138–180; the sequence is ILPREVLLCILQQLNFKSIVQCMQVCKHWRDCIKKEPSLFCCL.

As to quaternary structure, a part of the E3 ubiquitin ligase Skp1-Cullin-1-F-box (SCF) complex. Interacts with cul1, mcl1 and skp1.

Its subcellular location is the mitochondrion. The protein localises to the nucleus. Its function is as follows. Has a role in substrate recognition in the Skp1-Cullin-1/Cdc53-F-box (SCF) ubiquitin ligase complex. Required for the maintenance of telomere length and transcriptional silencing at the telomere. Also required for chromosome segregation. This chain is F-box/TPR repeat protein pof3 (pof3), found in Schizosaccharomyces pombe (strain 972 / ATCC 24843) (Fission yeast).